A 509-amino-acid polypeptide reads, in one-letter code: Photosystem II CP47 reaction center protein (509 aa).

The next 6 membrane-spanning stretches (helical) occupy residues 21–36, 101–115, 140–156, 203–218, 237–252, and 457–472; these read SVHI…WAGS, IVFS…IWHW, GIHL…FGAF, IAAG…FHLS, VLSS…AFVV, and SFAL…HGAR.

This sequence belongs to the PsbB/PsbC family. PsbB subfamily. As to quaternary structure, PSII is composed of 1 copy each of membrane proteins PsbA, PsbB, PsbC, PsbD, PsbE, PsbF, PsbH, PsbI, PsbJ, PsbK, PsbL, PsbM, PsbT, PsbX, PsbY, PsbZ, Psb30/Ycf12, at least 3 peripheral proteins of the oxygen-evolving complex and a large number of cofactors. It forms dimeric complexes. Binds multiple chlorophylls. PSII binds additional chlorophylls, carotenoids and specific lipids. is required as a cofactor.

The protein localises to the plastid. The protein resides in the chloroplast thylakoid membrane. Functionally, one of the components of the core complex of photosystem II (PSII). It binds chlorophyll and helps catalyze the primary light-induced photochemical processes of PSII. PSII is a light-driven water:plastoquinone oxidoreductase, using light energy to abstract electrons from H(2)O, generating O(2) and a proton gradient subsequently used for ATP formation. The sequence is that of Photosystem II CP47 reaction center protein from Cicer arietinum (Chickpea).